The primary structure comprises 275 residues: S-formylglutathione hydrolase (275 aa).

Catalysis depends on charge relay system residues S145, D221, and H254.

This sequence belongs to the esterase D family.

It carries out the reaction S-formylglutathione + H2O = formate + glutathione + H(+). Its function is as follows. Serine hydrolase involved in the detoxification of formaldehyde. Hydrolyzes S-formylglutathione to glutathione and formate. This is S-formylglutathione hydrolase from Haemophilus influenzae (strain ATCC 51907 / DSM 11121 / KW20 / Rd).